The chain runs to 689 residues: DNA topoisomerase 1 (689 aa).

The Toprim domain occupies 3-113; the sequence is DNLVIVESPA…KENRVVFNEI (111 aa). Residues Glu9 and Asp82 each coordinate Mg(2+). Residues 129 to 557 enclose the Topo IA-type catalytic domain; sequence EMNLVDAQQA…FFSSFKQDVE (429 aa). The tract at residues 163 to 168 is interaction with DNA; the sequence is SAGRVQ. Tyr298 functions as the O-(5'-phospho-DNA)-tyrosine intermediate in the catalytic mechanism. The interval 328–356 is disordered; the sequence is SKRKASGKQGDQDAHEAIRPSSTMRTPDD. 3 consecutive C4-type zinc fingers follow at residues 577–603, 617–645, and 658–681; these read CEIC…FPDC, CPKC…YPEC, and CPKC…CSNC.

Belongs to the type IA topoisomerase family. As to quaternary structure, monomer. Mg(2+) is required as a cofactor.

The catalysed reaction is ATP-independent breakage of single-stranded DNA, followed by passage and rejoining.. Functionally, releases the supercoiling and torsional tension of DNA, which is introduced during the DNA replication and transcription, by transiently cleaving and rejoining one strand of the DNA duplex. Introduces a single-strand break via transesterification at a target site in duplex DNA. The scissile phosphodiester is attacked by the catalytic tyrosine of the enzyme, resulting in the formation of a DNA-(5'-phosphotyrosyl)-enzyme intermediate and the expulsion of a 3'-OH DNA strand. The free DNA strand then undergoes passage around the unbroken strand, thus removing DNA supercoils. Finally, in the religation step, the DNA 3'-OH attacks the covalent intermediate to expel the active-site tyrosine and restore the DNA phosphodiester backbone. In Staphylococcus aureus (strain USA300), this protein is DNA topoisomerase 1.